The primary structure comprises 286 residues: Polyamine aminopropyltransferase (286 aa).

The region spanning 5–238 is the PABS domain; sequence TMWHETLHDQ…GIMTFAWATD (234 aa). An S-methyl-5'-thioadenosine-binding site is contributed by Q33. Spermidine is bound by residues H64 and D88. Residues E108 and 140–141 contribute to the S-methyl-5'-thioadenosine site; that span reads DG. Catalysis depends on D158, which acts as the Proton acceptor. Position 158–161 (158–161) interacts with spermidine; sequence DCTD. P165 contributes to the S-methyl-5'-thioadenosine binding site.

This sequence belongs to the spermidine/spermine synthase family. In terms of assembly, homodimer or homotetramer.

The protein localises to the cytoplasm. It catalyses the reaction S-adenosyl 3-(methylsulfanyl)propylamine + putrescine = S-methyl-5'-thioadenosine + spermidine + H(+). The protein operates within amine and polyamine biosynthesis; spermidine biosynthesis; spermidine from putrescine: step 1/1. In terms of biological role, catalyzes the irreversible transfer of a propylamine group from the amino donor S-adenosylmethioninamine (decarboxy-AdoMet) to putrescine (1,4-diaminobutane) to yield spermidine. The chain is Polyamine aminopropyltransferase from Salmonella newport (strain SL254).